The primary structure comprises 488 residues: Glutamyl-tRNA(Gln) amidotransferase subunit A (488 aa).

Residues lysine 77 and serine 152 each act as charge relay system in the active site. Catalysis depends on serine 176, which acts as the Acyl-ester intermediate.

The protein belongs to the amidase family. GatA subfamily. Heterotrimer of A, B and C subunits.

The enzyme catalyses L-glutamyl-tRNA(Gln) + L-glutamine + ATP + H2O = L-glutaminyl-tRNA(Gln) + L-glutamate + ADP + phosphate + H(+). In terms of biological role, allows the formation of correctly charged Gln-tRNA(Gln) through the transamidation of misacylated Glu-tRNA(Gln) in organisms which lack glutaminyl-tRNA synthetase. The reaction takes place in the presence of glutamine and ATP through an activated gamma-phospho-Glu-tRNA(Gln). In Streptococcus mutans serotype c (strain ATCC 700610 / UA159), this protein is Glutamyl-tRNA(Gln) amidotransferase subunit A.